Consider the following 497-residue polypeptide: METKLPPASTPTSPSSPGLSPVPPPDKVDGFSRRSLRRARPRRSHSSSQFRYQSNQQELTPLPLLKDVPASELHELLSRKLAQCGVMFDFLDCVADLKGKEVKRAALNELVECVGSTRGVLIEPVYPDIIRMISVNIFRTLPPSENPEFDPEEDEPNLEPSWPHLQLVYEFFLRFLESPDFQPSVAKRYVDQKFVLMLLELFDSEDPREREYLKTILHRVYGKFLGLRAYIRKQCNHIFLRFIYELEHFNGVAELLEILGSIINGFALPLKTEHKQFLVRVLIPLHSVKSLSVFHAQLAYCVVQFLEKDATLTEHVIRGLLKYWPKTCTQKEVMFLGEMEEILDVIEPSQFVKIQEPLFKQVARCVSSPHFQVAERALYFWNNEYILSLIEDNCHTVLPAVFGTLYQVSKEHWNQTIVSLIYNVLKTFMEMNGKLFDELTASYKLEKQQEQQKAQERQELWRGLEELRLRRLQGTQGAKEAPVPRPTPQVAASGGQS.

Positions 1-19 (METKLPPASTPTSPSSPGL) are enriched in low complexity. Disordered stretches follow at residues 1 to 55 (METK…YQSN) and 473 to 497 (QGTQ…GGQS). Residues S32, S35, S44, S46, S47, and S48 each carry the phosphoserine modification. A compositionally biased stretch (basic residues) spans 34–45 (RSLRRARPRRSH).

The protein belongs to the phosphatase 2A regulatory subunit B56 family. Component of the serine/threonine-protein phosphatase 2A complex (PP2A). This complex consists of a common heterodimeric core enzyme, composed of a 36 kDa catalytic subunit (subunit C) and a 65 kDa constant scaffold subunit (PR65 or subunit A), that associates with a variety of regulatory subunits. Proteins that associate with the core dimer include three families of regulatory subunits B (the R2/B/PR55/B55, R3/B''/PR72/PR130/PR59 and R5/B'/B56 families), the 48 kDa variable regulatory subunit, viral proteins, and cell signaling molecules. Interacts with SGO1. Interacts with AKT1. Ubiquitinated by CUL3-KLHL15 complex; this modification leads to proteasomal degradation. Widely expressed at the mRNA level, with highest levels in cerebellum and lung.

It localises to the cytoplasm. Its function is as follows. As the regulatory component of the serine/threonine-protein phosphatase 2A (PP2A) holoenzyme, modulates substrate specificity, subcellular localization, and responsiveness to phosphorylation. The phosphorylated form mediates the interaction between PP2A and AKT1, leading to AKT1 dephosphorylation. This chain is Serine/threonine-protein phosphatase 2A 56 kDa regulatory subunit beta isoform (Ppp2r5b), found in Rattus norvegicus (Rat).